A 264-amino-acid polypeptide reads, in one-letter code: Small ribosomal subunit protein uS2 (264 aa).

The segment at 228–264 (QLDAEDDYEDYDGSEYDDDYEETEYTDAVIPDEETEE) is disordered. Over residues 230 to 264 (DAEDDYEDYDGSEYDDDYEETEYTDAVIPDEETEE) the composition is skewed to acidic residues.

This sequence belongs to the universal ribosomal protein uS2 family.

In Nostoc punctiforme (strain ATCC 29133 / PCC 73102), this protein is Small ribosomal subunit protein uS2.